A 328-amino-acid polypeptide reads, in one-letter code: 3,4-dihydroxyphenylacetaldehyde synthase 2 (328 aa).

N111 is an active-site residue. The residue at position 222 (K222) is an N6-(pyridoxal phosphate)lysine.

The protein belongs to the group II decarboxylase family. Requires pyridoxal 5'-phosphate as cofactor.

The enzyme catalyses L-dopa + O2 + H2O + H(+) = 3,4-dihydroxyphenylacetaldehyde + H2O2 + NH4(+) + CO2. Catalyzes the decarboxylation-oxidative deamination of L-3,4-dihydroxyphenylalanine (L-DOPA) to 3,4-dihydroxylphenylacetaldehyde (DHPAA). Involved in cuticle development. Probably responsible for the protein cross-linking during the development of flexible cuticles. The chain is 3,4-dihydroxyphenylacetaldehyde synthase 2 (amd) from Drosophila simulans (Fruit fly).